The chain runs to 259 residues: Proteasome subunit alpha (259 aa).

The protein belongs to the peptidase T1A family. As to quaternary structure, the 20S proteasome core is composed of 14 alpha and 14 beta subunits that assemble into four stacked heptameric rings, resulting in a barrel-shaped structure. The two inner rings, each composed of seven catalytic beta subunits, are sandwiched by two outer rings, each composed of seven alpha subunits. The catalytic chamber with the active sites is on the inside of the barrel. Has a gated structure, the ends of the cylinder being occluded by the N-termini of the alpha-subunits. Is capped at one or both ends by the proteasome regulatory ATPase, PAN.

It localises to the cytoplasm. Its activity is regulated as follows. The formation of the proteasomal ATPase PAN-20S proteasome complex, via the docking of the C-termini of PAN into the intersubunit pockets in the alpha-rings, triggers opening of the gate for substrate entry. Interconversion between the open-gate and close-gate conformations leads to a dynamic regulation of the 20S proteasome proteolysis activity. Functionally, component of the proteasome core, a large protease complex with broad specificity involved in protein degradation. This Methanococcus vannielii (strain ATCC 35089 / DSM 1224 / JCM 13029 / OCM 148 / SB) protein is Proteasome subunit alpha.